The primary structure comprises 410 residues: MEAENAGSYSLQQAQAFYTFPFQQLMAEAPNMAVVNEQQMPEEVPAPAPAQEPVQEAPKGRKRKPRTTEPKQPVEPKKPVESKKSGKSAKSKEKQEKITDTFKVKRKVDRFNGVSEAELLTKTLPDILTFNLDIVIIGINPGLMAAYKGHHYPGPGNHFWKCLFMSGLSEVQLNHMDDHTLPGKYGIGFTNMVERTTPGSKDLSSKEFREGGRILVQKLQKYQPRIAVFNGKCIYEIFSKEVFGVKVKNLEFGLQPHKIPDTETLCYVMPSSSARCAQFPRAQDKVHYYIKLKDLRDQLKGIERNMDVQEVQYTFDLQLAQEDAKKMAVKEEKYDPGYEAAYGGAYGENPCSSEPCGFSSNGLIESVELRGESAFSGIPNGQWMTQSFTDQIPSFSNHCGTQEQEEESHA.

The segment at Glu-37 to Lys-97 is disordered. Residues Arg-66–Lys-97 are compositionally biased toward basic and acidic residues. Glycyl lysine isopeptide (Lys-Gly) (interchain with G-Cter in SUMO2) cross-links involve residues Lys-103 and Lys-248. Lys-330 participates in a covalent cross-link: Glycyl lysine isopeptide (Lys-Gly) (interchain with G-Cter in SUMO); alternate. Residue Lys-330 forms a Glycyl lysine isopeptide (Lys-Gly) (interchain with G-Cter in SUMO2); alternate linkage.

It belongs to the uracil-DNA glycosylase (UDG) superfamily. TDG/mug family. Homodimer. Interacts with AICDA and GADD45A. In terms of processing, sumoylation on Lys-330 by either SUMO1 or SUMO2 induces dissociation of the product DNA.

It localises to the nucleus. The enzyme catalyses Hydrolyzes mismatched double-stranded DNA and polynucleotides, releasing free thymine.. Its function is as follows. DNA glycosylase that plays a key role in active DNA demethylation: specifically recognizes and binds 5-formylcytosine (5fC) and 5-carboxylcytosine (5caC) in the context of CpG sites and mediates their excision through base-excision repair (BER) to install an unmethylated cytosine. Cannot remove 5-hydroxymethylcytosine (5hmC). According to an alternative model, involved in DNA demethylation by mediating DNA glycolase activity toward 5-hydroxymethyluracil (5hmU) produced by deamination of 5hmC. Also involved in DNA repair by acting as a thymine-DNA glycosylase that mediates correction of G/T mispairs to G/C pairs: in the DNA of higher eukaryotes, hydrolytic deamination of 5-methylcytosine to thymine leads to the formation of G/T mismatches. Its role in the repair of canonical base damage is however minor compared to its role in DNA demethylation. It is capable of hydrolyzing the carbon-nitrogen bond between the sugar-phosphate backbone of the DNA and a mispaired thymine. In addition to the G/T, it can remove thymine also from C/T and T/T mispairs in the order G/T &gt;&gt; C/T &gt; T/T. It has no detectable activity on apyrimidinic sites and does not catalyze the removal of thymine from A/T pairs or from single-stranded DNA. It can also remove uracil and 5-bromouracil from mispairs with guanine. This is G/T mismatch-specific thymine DNA glycosylase (TDG) from Homo sapiens (Human).